The primary structure comprises 396 residues: L-lactate dehydrogenase (396 aa).

The FMN hydroxy acid dehydrogenase domain maps to 1-380 (MIISAASDYR…SQDSLVQELD (380 aa)). Tyr-24 contacts substrate. FMN is bound by residues Ser-106 and Gln-127. Tyr-129 contacts substrate. Residue Thr-155 participates in FMN binding. Arg-164 contacts substrate. Residue Lys-251 coordinates FMN. The active-site Proton acceptor is the His-275. Arg-278 is a substrate binding site. 306–330 (DSGIRNGLDVVRMIALGADTVLLGR) provides a ligand contact to FMN.

It belongs to the FMN-dependent alpha-hydroxy acid dehydrogenase family. It depends on FMN as a cofactor.

The protein resides in the cell inner membrane. The enzyme catalyses (S)-lactate + A = pyruvate + AH2. In terms of biological role, catalyzes the conversion of L-lactate to pyruvate. Is coupled to the respiratory chain. The sequence is that of L-lactate dehydrogenase from Escherichia fergusonii (strain ATCC 35469 / DSM 13698 / CCUG 18766 / IAM 14443 / JCM 21226 / LMG 7866 / NBRC 102419 / NCTC 12128 / CDC 0568-73).